We begin with the raw amino-acid sequence, 43 residues long: Plasma membrane ATPase proteolipid 2 (43 aa).

The propeptide occupies 1-5; sequence MLMST. The chain crosses the membrane as a helical span at residues 9–29; sequence GVILVFILVGLACIAIISTII. At 30 to 43 the chain is on the cytoplasmic side; that stretch reads YRKWQARQRGLQRF.

In terms of assembly, monomer and homodimer. Associated with the 100 kDa subunit of the plasma membrane H(+)-ATPase.

It is found in the cell membrane. The protein is Plasma membrane ATPase proteolipid 2 (PMP2) of Saccharomyces cerevisiae (strain ATCC 204508 / S288c) (Baker's yeast).